Reading from the N-terminus, the 155-residue chain is Chaperone protein IpgC (155 aa).

Belongs to the LcrH/SycD chaperone family.

The protein localises to the cytoplasm. Its function is as follows. Assists the correct folding of nascent IpaB. Once it is bound to IpaB, it binds to IpaC and impedes their premature association that would lead to their degradation in the absence of IpcG. The protein is Chaperone protein IpgC (ipgC) of Shigella dysenteriae.